The chain runs to 120 residues: Large ribosomal subunit protein uL18 (120 aa).

Residues 1–22 are disordered; the sequence is MITKTSKNAARQKRHARVRAKL. Basic residues predominate over residues 10–20; it reads ARQKRHARVRA.

The protein belongs to the universal ribosomal protein uL18 family. As to quaternary structure, part of the 50S ribosomal subunit; part of the 5S rRNA/L5/L18/L25 subcomplex. Contacts the 5S and 23S rRNAs.

Its function is as follows. This is one of the proteins that bind and probably mediate the attachment of the 5S RNA into the large ribosomal subunit, where it forms part of the central protuberance. This Bacillus velezensis (strain DSM 23117 / BGSC 10A6 / LMG 26770 / FZB42) (Bacillus amyloliquefaciens subsp. plantarum) protein is Large ribosomal subunit protein uL18.